The primary structure comprises 149 residues: Deoxyuridine 5'-triphosphate nucleotidohydrolase (149 aa).

Substrate-binding positions include 68–70 (RSG), asparagine 81, 85–87 (LID), and methionine 95.

The protein belongs to the dUTPase family. Mg(2+) serves as cofactor.

It carries out the reaction dUTP + H2O = dUMP + diphosphate + H(+). The protein operates within pyrimidine metabolism; dUMP biosynthesis; dUMP from dCTP (dUTP route): step 2/2. Its function is as follows. This enzyme is involved in nucleotide metabolism: it produces dUMP, the immediate precursor of thymidine nucleotides and it decreases the intracellular concentration of dUTP so that uracil cannot be incorporated into DNA. This Polynucleobacter necessarius subsp. necessarius (strain STIR1) protein is Deoxyuridine 5'-triphosphate nucleotidohydrolase.